Consider the following 179-residue polypeptide: Putative undecaprenyl-phosphate N-acetylgalactosaminyl 1-phosphate transferase (179 aa).

The helical transmembrane segment at 39 to 59 (IWFALIGLAIALPMIAVFSIL) threads the bilayer.

Belongs to the bacterial sugar transferase family.

The protein resides in the cell membrane. It catalyses the reaction di-trans,octa-cis-undecaprenyl phosphate + UDP-N-acetyl-alpha-D-galactosamine = N-acetyl-alpha-D-galactosaminyl-di-trans,octa-cis-undecaprenyl diphosphate + UMP. It participates in cell wall biogenesis; teichuronic acid biosynthesis. Functionally, might mediate the very first reaction in teichuronic synthesis, i.e. the formation of lipid-linked N-acetylglucosamine. In Bacillus subtilis (strain 168), this protein is Putative undecaprenyl-phosphate N-acetylgalactosaminyl 1-phosphate transferase (tuaA).